Consider the following 182-residue polypeptide: Protein LURP-one-related 7 (182 aa).

It belongs to the LOR family.

Its function is as follows. Might be related to the phospholipid scramblase and tubby-like superfamily of membrane tethered transcription factors. The chain is Protein LURP-one-related 7 from Arabidopsis thaliana (Mouse-ear cress).